The following is a 237-amino-acid chain: 7-carboxy-7-deazaguanine synthase (237 aa).

Substrate contacts are provided by residues 15-17 (LSG) and arginine 30. Positions 21-233 (STGIPTIFVR…IQTHKYIWGD (213 aa)) constitute a Radical SAM core domain. [4Fe-4S] cluster contacts are provided by cysteine 34, cysteine 38, and cysteine 48. Threonine 50 is a binding site for Mg(2+). Threonine 84 contacts substrate. Position 86 (glycine 86) interacts with S-adenosyl-L-methionine.

Belongs to the radical SAM superfamily. 7-carboxy-7-deazaguanine synthase family. As to quaternary structure, homodimer. It depends on [4Fe-4S] cluster as a cofactor. S-adenosyl-L-methionine is required as a cofactor. Mg(2+) serves as cofactor.

The enzyme catalyses 6-carboxy-5,6,7,8-tetrahydropterin + H(+) = 7-carboxy-7-deazaguanine + NH4(+). It participates in purine metabolism; 7-cyano-7-deazaguanine biosynthesis. Its function is as follows. Catalyzes the complex heterocyclic radical-mediated conversion of 6-carboxy-5,6,7,8-tetrahydropterin (CPH4) to 7-carboxy-7-deazaguanine (CDG), a step common to the biosynthetic pathways of all 7-deazapurine-containing compounds. The polypeptide is 7-carboxy-7-deazaguanine synthase (Leptospira interrogans serogroup Icterohaemorrhagiae serovar Lai (strain 56601)).